The sequence spans 350 residues: DNA polymerase IV (350 aa).

One can recognise a UmuC domain in the interval 7-188 (IIHIDMDYFF…LPVKKLFGVG (182 aa)). Mg(2+)-binding residues include Asp11 and Asp106. Residue Glu107 is part of the active site.

It belongs to the DNA polymerase type-Y family. As to quaternary structure, monomer. Mg(2+) serves as cofactor.

The protein localises to the cytoplasm. It carries out the reaction DNA(n) + a 2'-deoxyribonucleoside 5'-triphosphate = DNA(n+1) + diphosphate. Its function is as follows. Poorly processive, error-prone DNA polymerase involved in untargeted mutagenesis. Copies undamaged DNA at stalled replication forks, which arise in vivo from mismatched or misaligned primer ends. These misaligned primers can be extended by PolIV. Exhibits no 3'-5' exonuclease (proofreading) activity. May be involved in translesional synthesis, in conjunction with the beta clamp from PolIII. This Francisella philomiragia subsp. philomiragia (strain ATCC 25017 / CCUG 19701 / FSC 153 / O#319-036) protein is DNA polymerase IV.